A 479-amino-acid chain; its full sequence is Catalase A (479 aa).

The span at 1-21 (MSKILTTASGAPVADNQNSRS) shows a compositional bias: polar residues. A disordered region spans residues 1 to 25 (MSKILTTASGAPVADNQNSRSAGPR). Residues His-53 and Asn-126 contribute to the active site. Heme is bound at residue Tyr-336. Positions 350 to 376 (QLPVNAPRCPVNSYQRDGSMATGSYGS) are disordered. Polar residues predominate over residues 361 to 376 (NSYQRDGSMATGSYGS).

The protein belongs to the catalase family. Requires heme as cofactor.

It carries out the reaction 2 H2O2 = O2 + 2 H2O. Activated by peroxide. The major expressed catalase protein in strain Corvallis in stationary phase. Decomposes hydrogen peroxide into water and oxygen; serves to protect cells from the toxic effects of hydrogen peroxide. The chain is Catalase A (katA) from Pseudomonas putida (Arthrobacter siderocapsulatus).